The sequence spans 241 residues: Small ribosomal subunit protein uS3 (241 aa).

Residues 39–107 form the KH type-2 domain; that stretch reads IRTYLKKELY…PLSVNIKEEK (69 aa). A disordered region spans residues 214 to 241; sequence AEVKEEQQKEGARRPKRAPKRENSGKAE. The span at 215–226 shows a compositional bias: basic and acidic residues; it reads EVKEEQQKEGAR.

The protein belongs to the universal ribosomal protein uS3 family. In terms of assembly, part of the 30S ribosomal subunit. Forms a tight complex with proteins S10 and S14.

Binds the lower part of the 30S subunit head. Binds mRNA in the 70S ribosome, positioning it for translation. This is Small ribosomal subunit protein uS3 from Sulfurimonas denitrificans (strain ATCC 33889 / DSM 1251) (Thiomicrospira denitrificans (strain ATCC 33889 / DSM 1251)).